Reading from the N-terminus, the 285-residue chain is Probable endonuclease 4 (285 aa).

Zn(2+) contacts are provided by His-69, His-109, Glu-145, Asp-179, His-182, His-216, Asp-229, His-231, and Glu-261.

The protein belongs to the AP endonuclease 2 family. The cofactor is Zn(2+).

It carries out the reaction Endonucleolytic cleavage to 5'-phosphooligonucleotide end-products.. Endonuclease IV plays a role in DNA repair. It cleaves phosphodiester bonds at apurinic or apyrimidinic (AP) sites, generating a 3'-hydroxyl group and a 5'-terminal sugar phosphate. This Yersinia pseudotuberculosis serotype O:1b (strain IP 31758) protein is Probable endonuclease 4.